Here is a 409-residue protein sequence, read N- to C-terminus: Broad specificity amino-acid racemase (409 aa).

A signal peptide spans 1–23 (MPFSRTLLALSLGMALLQNPAFA). A disulfide bridge links Cys70 with Cys96. Catalysis depends on Lys74, which acts as the Proton acceptor. At Lys74 the chain carries N6-(pyridoxal phosphate)lysine. A substrate-binding site is contributed by Arg173. The active-site Proton acceptor is Tyr300. Met348 contributes to the substrate binding site.

It belongs to the alanine racemase family. Bsr subfamily. As to quaternary structure, homodimer. Pyridoxal 5'-phosphate serves as cofactor.

The protein resides in the periplasm. It carries out the reaction an L-alpha-amino acid = a D-alpha-amino acid. The enzyme catalyses L-lysine = D-lysine. It catalyses the reaction L-arginine = D-arginine. The catalysed reaction is L-ornithine = D-ornithine. It carries out the reaction L-alanine = D-alanine. The enzyme catalyses L-methionine = D-methionine. Amino-acid racemase able to utilize a broad range of substrates. Is mostly active with lysine and arginine and, to a lesser extent, with ornithine, whereas is about 10 times less active with alanine, methionine and ethionine. With phenylalanine as substrate only a trace activity is detectable, and is inactive with glutamate. Plays a key role in the catabolism of D-arginine and D-lysine, that allows P.taetrolens strain NBRC 3460 to grow on these basic D-amino acids as a sole carbon source. In Pseudomonas taetrolens, this protein is Broad specificity amino-acid racemase.